The sequence spans 231 residues: ATP-dependent dethiobiotin synthetase BioD (231 aa).

An ATP-binding site is contributed by 12–17 (DVGKTV). Mg(2+) is bound at residue Thr-16. Lys-37 is a catalytic residue. Thr-41 contacts substrate. ATP-binding positions include Asp-50, 109–112 (EGAG), 170–171 (GS), and 200–202 (PAG). Residues Asp-50 and Glu-109 each coordinate Mg(2+).

Belongs to the dethiobiotin synthetase family. In terms of assembly, homodimer. Mg(2+) is required as a cofactor.

The protein localises to the cytoplasm. It carries out the reaction (7R,8S)-7,8-diammoniononanoate + CO2 + ATP = (4R,5S)-dethiobiotin + ADP + phosphate + 3 H(+). Its pathway is cofactor biosynthesis; biotin biosynthesis; biotin from 7,8-diaminononanoate: step 1/2. In terms of biological role, catalyzes a mechanistically unusual reaction, the ATP-dependent insertion of CO2 between the N7 and N8 nitrogen atoms of 7,8-diaminopelargonic acid (DAPA, also called 7,8-diammoniononanoate) to form a ureido ring. This chain is ATP-dependent dethiobiotin synthetase BioD, found in Rhodococcus jostii (strain RHA1).